The sequence spans 98 residues: NADH-ubiquinone oxidoreductase chain 4L (98 aa).

The next 3 membrane-spanning stretches (helical) occupy residues 1–21 (MSSIYMNILLAFTMALLGLLM), 29–49 (SLLCLEGMMLSLFILSTVTML), and 61–81 (VMLMVFAACEAAVGLALLVTV).

The protein belongs to the complex I subunit 4L family. As to quaternary structure, core subunit of respiratory chain NADH dehydrogenase (Complex I) which is composed of 45 different subunits.

It is found in the mitochondrion inner membrane. The enzyme catalyses a ubiquinone + NADH + 5 H(+)(in) = a ubiquinol + NAD(+) + 4 H(+)(out). Functionally, core subunit of the mitochondrial membrane respiratory chain NADH dehydrogenase (Complex I) which catalyzes electron transfer from NADH through the respiratory chain, using ubiquinone as an electron acceptor. Part of the enzyme membrane arm which is embedded in the lipid bilayer and involved in proton translocation. The chain is NADH-ubiquinone oxidoreductase chain 4L (MT-ND4L) from Tamandua tetradactyla (Southern anteater).